We begin with the raw amino-acid sequence, 180 residues long: Der GTPase-activating protein YihI (180 aa).

The segment covering methionine 1–valine 10 has biased composition (polar residues). Disordered stretches follow at residues methionine 1–threonine 102 and aspartate 158–glutamate 180. Basic and acidic residues predominate over residues threonine 21–arginine 32. Positions serine 45 to glutamine 54 are enriched in polar residues. A compositionally biased stretch (basic and acidic residues) spans lysine 55 to isoleucine 67. A compositionally biased stretch (low complexity) spans proline 84–proline 93.

It belongs to the YihI family. Interacts with Der.

In terms of biological role, a GTPase-activating protein (GAP) that modifies Der/EngA GTPase function. May play a role in ribosome biogenesis. This Erwinia tasmaniensis (strain DSM 17950 / CFBP 7177 / CIP 109463 / NCPPB 4357 / Et1/99) protein is Der GTPase-activating protein YihI.